An 878-amino-acid polypeptide reads, in one-letter code: MSDQPTPMMAQYLAIREANPGALLFYRMGDFYEMFFEDAVAAAAALDIALTKRGTHLGEPIPMCGVPVHAAESYLLTLIRKGFRVAIAEQMEDPAEAKKRGSKSVVARDVVRLVTPGTLTEESLLEARRHNFLASFASVRDESALAWVDISTGAFRVMPCPPARLAPELARHAPRELLAAEGANLDEIAAEAGAALTELPGGSFDSSAATRRLCALFSVETLDGFGQFSRAELAAMGAIADYLELTQKGRMPLIRPPVREALGGAMQIDAATRRNLELTQALSGGREGSLLAAIDRSVTAGGARLLERRISAPSRDLDEIHARQAAVAHLVDEPRLTADLREALSRAPDMDRALSRLALERGGPRDLAAIRAGLTQGAAIAAMLGNDEIAVLAEAAHDLTGHDALIDLLDEALVAEPPLLARDGGFVAPGYDEDLDETRRLRDEGRGVIARMQADYIAETGVQSLKIKHNNVLGYFIETTSTHAERMLAPPLNERFIHRQTTANQIRFTTVELSELETRILNARDRALEIEREIFARLSRAVLDRAGPVGQAARALAEIDLTAAFADLASGEGWVRPEVDASRAFVIEGGRHPVVERALKRKGEAFVANDCALTQGETPAIWLLTGPNMAGKSTFLRQNALIAILAQAGGFVPARRAHIGLVSQLFSRVGAADDLARGRSTFMVEMVETAAILNQADDHALVILDEIGRGTATWDGLSIAWAVMEHLHATNRCRALFATHYHEMTSLSARLPGVENATVAVREWEGEVIFLHEVRKGAADRSYGVQVARLAGLPPSVVDRARDILHQLESGERQGTGKPAALLDDLPLFRAAPAPAPAGKAKPSVVEDRLRSLNPDTISAREALDLVYELRGMLDGEP.

ATP is bound at residue 626–633 (GPNMAGKS).

The protein belongs to the DNA mismatch repair MutS family.

Functionally, this protein is involved in the repair of mismatches in DNA. It is possible that it carries out the mismatch recognition step. This protein has a weak ATPase activity. This chain is DNA mismatch repair protein MutS, found in Paracoccus denitrificans (strain Pd 1222).